The primary structure comprises 349 residues: N-formyl peptide receptor 3 (349 aa).

Residues 1 to 27 lie on the Extracellular side of the membrane; it reads METNFSIPLNESEEVLPEPAGHTVLWI. N-linked (GlcNAc...) asparagine glycans are attached at residues N4 and N10. The chain crosses the membrane as a helical span at residues 28 to 50; sequence FSLLVHGVTFIFGVLGNGLVIWV. Over 51–61 the chain is Cytoplasmic; that stretch reads AGFRMTRTVNT. A helical transmembrane segment spans residues 62–83; sequence ICYLNLALADFSFSAILPFRMV. At 84-100 the chain is on the extracellular side; it reads SVAMREKWPFGTFLCKL. Residues C98 and C176 are joined by a disulfide bond. Residues 101-121 form a helical membrane-spanning segment; that stretch reads VHVMIDINLFVSVYLITIIAL. Over 122-140 the chain is Cytoplasmic; sequence DRCICVLHPAWAQNHRTMS. A helical membrane pass occupies residues 141–162; it reads LAKRVMMGLWILAIVLTLPNFI. At 163–205 the chain is on the extracellular side; the sequence is FWTTISTKNGDTYCIFNFPFWGDTAVERLNAFITMGKVFLILH. Residues 206-226 traverse the membrane as a helical segment; the sequence is FIIGFSMPMSIITVCYGIIAA. The Cytoplasmic portion of the chain corresponds to 227-242; that stretch reads KIHRNHMIKSSSPLRV. A helical transmembrane segment spans residues 243 to 266; sequence FAAVVASFFICWFPYELIGILMAV. Residues 267-286 lie on the Extracellular side of the membrane; sequence WLKEMLLNGKYKIILVLLNP. A helical transmembrane segment spans residues 287–306; sequence TSSLAFFNSCLNPILYVFLG. The Cytoplasmic segment spans residues 307–349; the sequence is SNFQERLIRSLPTSLERALTEVPDSAQTSNTHTNSASPPEETE. The interval 328–349 is disordered; it reads VPDSAQTSNTHTNSASPPEETE. The segment covering 331-343 has biased composition (polar residues); sequence SAQTSNTHTNSAS.

Belongs to the G-protein coupled receptor 1 family.

It is found in the cell membrane. Low affinity receptor for N-formyl-methionyl peptides, which are powerful neutrophils chemotactic factors. Binding of FMLP to the receptor causes activation of neutrophils. This response is mediated via a G-protein that activates a phosphatidylinositol-calcium second messenger system. The sequence is that of N-formyl peptide receptor 3 (FPR3) from Pongo pygmaeus (Bornean orangutan).